Consider the following 549-residue polypeptide: CTP synthase (549 aa).

The amidoligase domain stretch occupies residues 1–266 (MSAKYIFVTG…DKLALRYLHL (266 aa)). Residue serine 14 coordinates CTP. Serine 14 provides a ligand contact to UTP. Residues 15–20 (SLGKGL) and aspartate 72 contribute to the ATP site. Mg(2+)-binding residues include aspartate 72 and glutamate 140. CTP contacts are provided by residues 147–149 (DIE), 187–192 (KTKPTQ), and lysine 223. Residues 187 to 192 (KTKPTQ) and lysine 223 each bind UTP. 239–241 (KDV) provides a ligand contact to ATP. The Glutamine amidotransferase type-1 domain occupies 291–533 (SIGIVGKYVE…VKAAYQNHKP (243 aa)). Glycine 353 serves as a coordination point for L-glutamine. Cysteine 380 serves as the catalytic Nucleophile; for glutamine hydrolysis. L-glutamine-binding positions include 381-384 (LGMQ), glutamate 404, and arginine 461. Catalysis depends on residues histidine 506 and glutamate 508.

This sequence belongs to the CTP synthase family. In terms of assembly, homotetramer.

The catalysed reaction is UTP + L-glutamine + ATP + H2O = CTP + L-glutamate + ADP + phosphate + 2 H(+). It carries out the reaction L-glutamine + H2O = L-glutamate + NH4(+). It catalyses the reaction UTP + NH4(+) + ATP = CTP + ADP + phosphate + 2 H(+). It functions in the pathway pyrimidine metabolism; CTP biosynthesis via de novo pathway; CTP from UDP: step 2/2. Allosterically activated by GTP, when glutamine is the substrate; GTP has no effect on the reaction when ammonia is the substrate. The allosteric effector GTP functions by stabilizing the protein conformation that binds the tetrahedral intermediate(s) formed during glutamine hydrolysis. Inhibited by the product CTP, via allosteric rather than competitive inhibition. In terms of biological role, catalyzes the ATP-dependent amination of UTP to CTP with either L-glutamine or ammonia as the source of nitrogen. Regulates intracellular CTP levels through interactions with the four ribonucleotide triphosphates. The polypeptide is CTP synthase (Acidobacterium capsulatum (strain ATCC 51196 / DSM 11244 / BCRC 80197 / JCM 7670 / NBRC 15755 / NCIMB 13165 / 161)).